Here is a 125-residue protein sequence, read N- to C-terminus: MKPSIVTFLMLAAVTAAVSAEDPTMSALKSRVEEIAGQVHGVEDQETTPDLSHCVEPKLCCGSLTTPLDPILDPILLSLGINAAQIVGSVGLLCHPWTEECSSAPQCCTEANLLGGTLALGCSKL.

The signal sequence occupies residues 1-20 (MKPSIVTFLMLAAVTAAVSA). Intrachain disulfides connect Cys54-Cys107, Cys60-Cys101, Cys61-Cys94, and Cys108-Cys122.

Belongs to the fungal hydrophobin family. Self-assembles to form functional amyloid fibrils called rodlets. Self-assembly into fibrillar rodlets occurs spontaneously at hydrophobic:hydrophilic interfaces and the rodlets further associate laterally to form amphipathic monolayers.

It localises to the secreted. Its subcellular location is the cell wall. Functionally, aerial growth, conidiation, and dispersal of filamentous fungi in the environment rely upon a capability of their secreting small amphipathic proteins called hydrophobins (HPBs) with low sequence identity. Class I can self-assemble into an outermost layer of rodlet bundles on aerial cell surfaces, conferring cellular hydrophobicity that supports fungal growth, development and dispersal; whereas Class II form highly ordered films at water-air interfaces through intermolecular interactions but contribute nothing to the rodlet structure. RodF and rodG belong to Class III, which contains hydrophobins with intermediate (between classes I and II) or atypical characteristics. RodG, unlike rodA, is not required for rodlet formation. The chain is Class III hydrophobin G from Aspergillus fumigatus (strain ATCC MYA-4609 / CBS 101355 / FGSC A1100 / Af293) (Neosartorya fumigata).